The chain runs to 331 residues: Very-long-chain 3-oxoacyl-CoA reductase (331 aa).

Residues 15–35 form a helical membrane-spanning segment; that stretch reads VQWALAGVGALYISAKVLSYL. NADP(+)-binding residues include Val60, Asp115, Asp123, Asn142, Tyr209, Lys213, Ile242, and Ser244. Tyr209 acts as the Proton donor in catalysis. Lys213 functions as the Lowers pKa of active site Tyr in the catalytic mechanism.

The protein belongs to the short-chain dehydrogenases/reductases (SDR) family.

The protein resides in the endoplasmic reticulum membrane. The catalysed reaction is a very-long-chain (3R)-3-hydroxyacyl-CoA + NADP(+) = a very-long-chain 3-oxoacyl-CoA + NADPH + H(+). It participates in lipid metabolism; fatty acid biosynthesis. Component of the microsomal membrane bound fatty acid elongation system, which produces the 26-carbon very long-chain fatty acids (VLCFA) from palmitate. Catalyzes the reduction of the 3-ketoacyl-CoA intermediate that is formed in each cycle of fatty acid elongation. VLCFAs serve as precursors for ceramide and sphingolipids. This Pyricularia oryzae (strain 70-15 / ATCC MYA-4617 / FGSC 8958) (Rice blast fungus) protein is Very-long-chain 3-oxoacyl-CoA reductase.